The chain runs to 393 residues: Fractalkine (393 aa).

The first 24 residues, 1–24 (MAPSQLAWLLRLAAFFHLCTLLAG), serve as a signal peptide directing secretion. The tract at residues 25-100 (QHLGMTKCNI…HQTAALTRNG (76 aa)) is chemokine and involved in interaction with ITGAV:ITGB3 and ITGA4:ITGB1. At 25–337 (QHLGMTKCNI…PDSQAATRRQ (313 aa)) the chain is on the extracellular side. 2 cysteine pairs are disulfide-bonded: cysteine 32–cysteine 58 and cysteine 36–cysteine 74. Asparagine 33 carries an N-linked (GlcNAc...) asparagine glycan. The mucin-like stalk stretch occupies residues 101–337 (GKFEKRVDNV…PDSQAATRRQ (237 aa)). Disordered stretches follow at residues 114 to 184 (ITSA…PQST) and 213 to 303 (EKAT…SGSQ). Polar residues-rich tracts occupy residues 153 to 172 (GTSQEPPAAVTGSSPSTSKA) and 223 to 240 (ALSTQASTTSSPKQNVGS). Residues 338-358 (AVGLLAFLGLLFCLGVAMFAY) traverse the membrane as a helical segment. The Cytoplasmic segment spans residues 359–393 (QSLQGCPRKMAGEMVEGLRYVPRSCGSNSYVLVPV).

It belongs to the intercrine delta family. In terms of assembly, monomer. Forms a ternary complex with CX3CR1 and ITGAV:ITGB3 or ITGA4:ITGB1. Post-translationally, a soluble short form may be released by proteolytic cleavage from the long membrane-anchored form. Highest levels in brain (neurons). Significant levels in kidney, heart, lung and adrenal gland.

The protein resides in the cell membrane. The protein localises to the secreted. Chemokine that acts as a ligand for both CX3CR1 and integrins ITGAV:ITGB3 and ITGA4:ITGB1. The CX3CR1-CX3CL1 signaling exerts distinct functions in different tissue compartments, such as immune response, inflammation, cell adhesion and chemotaxis. Regulates leukocyte adhesion and migration processes at the endothelium. Can activate integrins in both a CX3CR1-dependent and CX3CR1-independent manner. In the presence of CX3CR1, activates integrins by binding to the classical ligand-binding site (site 1) in integrins. In the absence of CX3CR1, binds to a second site (site 2) in integrins which is distinct from site 1 and enhances the binding of other integrin ligands to site 1. Its function is as follows. The soluble form is chemotactic for T-cells and monocytes, but not for neutrophils. Functionally, the membrane-bound form promotes adhesion of those leukocytes to endothelial cells. The polypeptide is Fractalkine (Cx3cl1) (Rattus norvegicus (Rat)).